We begin with the raw amino-acid sequence, 176 residues long: MSAATKKRYITNKVGSEFYELAEEDIIAQVRQSRGNNLHEVLDQNGDSYVVSMPTKFRKAVWLRRDQFVVVRPIAEGDKVKGEIEYILDQDNVLYIRELGKWPSCFEEHALKMTREAKRGKANDKMIDDDMLPPSESEEEDDESEDEIEDTYDEDEETDDEEFDTYNPNRMQAPSK.

Positions 5-89 (TKKRYITNKV…VKGEIEYILD (85 aa)) constitute an S1-like domain. Over residues 117–128 (AKRGKANDKMID) the composition is skewed to basic and acidic residues. The tract at residues 117–176 (AKRGKANDKMIDDDMLPPSESEEEDDESEDEIEDTYDEDEETDDEEFDTYNPNRMQAPSK) is disordered. Residues 129–164 (DDMLPPSESEEEDDESEDEIEDTYDEDEETDDEEFD) are compositionally biased toward acidic residues. Residues 166–176 (YNPNRMQAPSK) show a composition bias toward polar residues.

It belongs to the EIF1AD family.

This Caenorhabditis briggsae protein is Probable RNA-binding protein EIF1AD.